Reading from the N-terminus, the 259-residue chain is Ubiquitin-conjugating enzyme E2 J2 (259 aa).

Over 1–226 the chain is Cytoplasmic; that stretch reads MSNNSNKRAP…AGLPQANRHH (226 aa). The region spanning 12–162 is the UBC core domain; it reads TATQRLKQDY…DKVFCELFPE (151 aa). The active-site Glycyl thioester intermediate is cysteine 94. The helical; Anchor for type IV membrane protein transmembrane segment at 227 to 247 threads the bilayer; the sequence is GLLGGALANLFVIVGFAAFAY. Residues 248 to 259 are Lumenal-facing; that stretch reads TVKYVLRSIAQE.

The protein belongs to the ubiquitin-conjugating enzyme family. Interacts with murid herpesvirus 4 protein K3 (mK3).

It is found in the endoplasmic reticulum membrane. It carries out the reaction S-ubiquitinyl-[E1 ubiquitin-activating enzyme]-L-cysteine + [E2 ubiquitin-conjugating enzyme]-L-cysteine = [E1 ubiquitin-activating enzyme]-L-cysteine + S-ubiquitinyl-[E2 ubiquitin-conjugating enzyme]-L-cysteine.. It participates in protein modification; protein ubiquitination. Its function is as follows. Catalyzes the covalent attachment of ubiquitin to other proteins. Seems to function in the selective degradation of misfolded membrane proteins from the endoplasmic reticulum (ERAD). In cooperation with the GATOR2 complex, catalyzes 'Lys-6'-linked ubiquitination of NPRL2. In case of infection by the murid herpesvirus 4, its association with the viral E3 ligase K3 mediates ubiquitination of host surface class I (MHC-I) H-2D(b)/H2-D1 and H-2K(b)/H2-K1 molecules before they exit the endoplasmic reticulum, leading to their degradation by the ERAD system, thus blocking the immune detection of virus-infected cells. The complex formed with the murid herpesvirus 4 protein K3 mediates ubiquitination of lysine, as well as serine and threonine residues present in the cytoplasmic tail of surface class I molecules and promotes ubiquitination of hydroxylated serine or threonine residues via ester bonds instead of the classical isopeptide linkage. The polypeptide is Ubiquitin-conjugating enzyme E2 J2 (Ube2j2) (Mus musculus (Mouse)).